Reading from the N-terminus, the 1045-residue chain is FERM, ARHGEF and pleckstrin domain-containing protein 1 (1045 aa).

The interval 1 to 37 is disordered; sequence MGEIEQRPTPGSRLGAPENSGISTLERGQKPPPTPSG. 2 positions are modified to phosphoserine: serine 20 and serine 23. Threonine 24 is modified (phosphothreonine). Residues 40-320 form the FERM domain; it reads VSIKIQMLDD…EHHAFFRLFE (281 aa). Phosphoserine is present on residues serine 340, serine 373, serine 389, serine 403, serine 418, serine 427, and serine 433. The tract at residues 361–534 is disordered; the sequence is FERKHSKIHS…TDDEDEGRRK (174 aa). Polar residues predominate over residues 373-396; that stretch reads SLASQPTELNSEVLEQSQQSTSLT. 2 stretches are compositionally biased toward polar residues: residues 471–489 and 496–511; these read TGSLTGSPHLSELSVNSQG and VTLSPNLSPDTKQASP. Residues serine 510 and serine 514 each carry the phosphoserine modification. The DH domain maps to 540-730; it reads KAYFIAKEVS…TEMVAQLHGT (191 aa). One can recognise a PH 1 domain in the interval 759–856; sequence EFIRLGSLSK…WVEDIQMAID (98 aa). Serine 833, serine 872, and serine 878 each carry phosphoserine. Positions 864-903 are disordered; the sequence is PAPEFLASSPPDNKSPDEATAADQESEDDLSASRTSLERQ. A Phosphothreonine modification is found at threonine 883. A phosphoserine mark is found at serine 889, serine 896, and serine 899. Positions 932–1029 constitute a PH 2 domain; that stretch reads ENQLSGNLLR…WMEVIRSATS (98 aa).

Interacts with CADM1. Interacts with RAC1. In terms of tissue distribution, detected in cAMP-treated chondrocytes, but not in untreated chondrocytes. Detected in fetal brain, heart and spleen, and in adult testis, kidney and lung.

It is found in the cell membrane. It localises to the synapse. The protein localises to the synaptosome. Its subcellular location is the cytoplasm. The protein resides in the cytosol. It is found in the cell projection. It localises to the filopodium. The protein localises to the dendrite. Its subcellular location is the dendritic spine. In terms of biological role, functions as a guanine nucleotide exchange factor for RAC1. May play a role in semaphorin signaling. Plays a role in the assembly and disassembly of dendritic filopodia, the formation of dendritic spines, regulation of dendrite length and ultimately the formation of synapses. In Homo sapiens (Human), this protein is FERM, ARHGEF and pleckstrin domain-containing protein 1 (FARP1).